We begin with the raw amino-acid sequence, 434 residues long: uncharacterized protein (434 aa).

The N-terminal stretch at M1–G17 is a signal peptide. 12 consecutive transmembrane segments (helical) span residues A48–L68, E70–A90, Y112–F132, T141–V161, W173–T193, Y206–V226, Y232–L252, E271–Y291, T305–F325, W344–L364, A380–F400, and F404–I424.

The protein localises to the membrane. This is an uncharacterized protein from Arabidopsis thaliana (Mouse-ear cress).